The primary structure comprises 359 residues: UPF0283 membrane protein R01807 (359 aa).

A run of 2 helical transmembrane segments spans residues 76–96 (FGKI…GLWI) and 109–129 (WLGY…LIVV).

This sequence belongs to the UPF0283 family.

It is found in the cell inner membrane. The chain is UPF0283 membrane protein R01807 from Rhizobium meliloti (strain 1021) (Ensifer meliloti).